Here is a 118-residue protein sequence, read N- to C-terminus: Large ribosomal subunit protein bL19 (118 aa).

This sequence belongs to the bacterial ribosomal protein bL19 family.

This protein is located at the 30S-50S ribosomal subunit interface and may play a role in the structure and function of the aminoacyl-tRNA binding site. The protein is Large ribosomal subunit protein bL19 of Ligilactobacillus salivarius (strain UCC118) (Lactobacillus salivarius).